The sequence spans 647 residues: Phosphatidylinositol polyphosphate 5-phosphatase type IV (647 aa).

Disordered stretches follow at residues 1–80 (MPSK…QPPI), 101–131 (RGSQ…PAYS), and 177–196 (HRDA…HASH). Copy 1 of the repeat occupies 52–55 (PMPP). Residues 52 to 243 (PMPPFSIPAK…AHSNLGPSRP (192 aa)) are 3 X 4 AA repeats of P-X-X-P. Residues 60 to 75 (AKTSNQNPQTKANLIT) show a composition bias toward polar residues. The stretch at 76 to 79 (PQPP) is repeat 2. Position 103 is a phosphoserine (S103). The span at 120–129 (LQDSVAQSPA) shows a compositional bias: polar residues. T197 bears the Phosphothreonine mark. Repeat unit 3 spans residues 240 to 243 (PSRP). A phosphoserine mark is found at S245 and S259. Cysteine methyl ester is present on C644. C644 carries the S-farnesyl cysteine lipid modification. A propeptide spans 645-647 (TVS) (removed in mature form).

It belongs to the inositol polyphosphate 5-phosphatase family. In terms of assembly, interacts (when prenylated) with PDE6D; this is important for normal location in cilia. Highly expressed in testis, in pachytene and diplotene spermatocytes, but not in more mature elongating spermatids. Detected in neurons throughout the brain.

It is found in the cytoplasm. The protein localises to the cytoskeleton. It localises to the cilium axoneme. The protein resides in the golgi apparatus. Its subcellular location is the golgi stack membrane. It is found in the cell projection. The protein localises to the ruffle. It localises to the cell membrane. The protein resides in the nucleus. It carries out the reaction a 1,2-diacyl-sn-glycero-3-phospho-(1D-myo-inositol-4,5-bisphosphate) + H2O = a 1,2-diacyl-sn-glycero-3-phospho-(1D-myo-inositol 4-phosphate) + phosphate. The enzyme catalyses a 1,2-diacyl-sn-glycero-3-phospho-(1D-myo-inositol-3,4,5-trisphosphate) + H2O = a 1,2-diacyl-sn-glycero-3-phospho-(1D-myo-inositol-3,4-bisphosphate) + phosphate. The catalysed reaction is a 1,2-diacyl-sn-glycero-3-phospho-(1D-myo-inositol-3,5-bisphosphate) + H2O = a 1,2-diacyl-sn-glycero-3-phospho-(1D-myo-inositol-3-phosphate) + phosphate. Functionally, phosphatidylinositol (PtdIns) phosphatase that specifically hydrolyzes the 5-phosphate of phosphatidylinositol-3,4,5-trisphosphate (PtdIns(3,4,5)P3), phosphatidylinositol 4,5-bisphosphate (PtdIns(4,5)P2) and phosphatidylinositol 3,5-bisphosphate (PtdIns(3,5)P2). Specific for lipid substrates, inactive towards water soluble inositol phosphates. Specific for lipid substrates, inactive towards water soluble inositol phosphates. Plays an essential role in the primary cilium by controlling ciliary growth and phosphoinositide 3-kinase (PI3K) signaling and stability. The protein is Phosphatidylinositol polyphosphate 5-phosphatase type IV (Inpp5e) of Mus musculus (Mouse).